The sequence spans 199 residues: Cytochrome c-type cyt cy (199 aa).

Residues 7–27 (ITKIGVTLFAVALFYGFIYML) traverse the membrane as a helical segment. Low complexity predominate over residues 69–80 (AAETAEAAAPAE). A disordered region spans residues 69 to 93 (AAETAEAAAPAEPAAPPPPAYVEVD). 4 residues coordinate heme c: Cys-112, Cys-115, His-116, and Met-148.

Binds 1 heme c group covalently per subunit.

The protein localises to the cell membrane. Its function is as follows. Electron transfer pathways that operates during photosynthesis. This Rhodobacter capsulatus (strain ATCC BAA-309 / NBRC 16581 / SB1003) protein is Cytochrome c-type cyt cy (cycY).